Here is a 234-residue protein sequence, read N- to C-terminus: Glucosamine-6-phosphate deaminase (234 aa).

Residue D63 is the Proton acceptor; for enolization step of the active site. N129 acts as the For ring-opening step in catalysis. H131 (proton acceptor; for ring-opening step) is an active-site residue. E136 functions as the For ring-opening step in the catalytic mechanism.

This sequence belongs to the glucosamine/galactosamine-6-phosphate isomerase family. NagB subfamily.

The catalysed reaction is alpha-D-glucosamine 6-phosphate + H2O = beta-D-fructose 6-phosphate + NH4(+). The protein operates within amino-sugar metabolism; N-acetylneuraminate degradation; D-fructose 6-phosphate from N-acetylneuraminate: step 5/5. Catalyzes the reversible isomerization-deamination of glucosamine 6-phosphate (GlcN6P) to form fructose 6-phosphate (Fru6P) and ammonium ion. The protein is Glucosamine-6-phosphate deaminase of Listeria welshimeri serovar 6b (strain ATCC 35897 / DSM 20650 / CCUG 15529 / CIP 8149 / NCTC 11857 / SLCC 5334 / V8).